Reading from the N-terminus, the 437-residue chain is Ribosomal protein uS12 methylthiotransferase RimO (437 aa).

Residues 9–125 enclose the MTTase N-terminal domain; the sequence is PAIFLLSLGC…VLAAIGAHYC (117 aa). C18, C54, C88, C149, C153, and C156 together coordinate [4Fe-4S] cluster. The 230-residue stretch at 135–364 folds into the Radical SAM core domain; that stretch reads LTPPHYAFLK…MELQESIAAS (230 aa). One can recognise a TRAM domain in the interval 367 to 434; sequence RKLEGQTLTV…AYELFGRVGS (68 aa).

The protein belongs to the methylthiotransferase family. RimO subfamily. Requires [4Fe-4S] cluster as cofactor.

The protein localises to the cytoplasm. The enzyme catalyses L-aspartate(89)-[ribosomal protein uS12]-hydrogen + (sulfur carrier)-SH + AH2 + 2 S-adenosyl-L-methionine = 3-methylsulfanyl-L-aspartate(89)-[ribosomal protein uS12]-hydrogen + (sulfur carrier)-H + 5'-deoxyadenosine + L-methionine + A + S-adenosyl-L-homocysteine + 2 H(+). In terms of biological role, catalyzes the methylthiolation of an aspartic acid residue of ribosomal protein uS12. The polypeptide is Ribosomal protein uS12 methylthiotransferase RimO (Chlorobaculum parvum (strain DSM 263 / NCIMB 8327) (Chlorobium vibrioforme subsp. thiosulfatophilum)).